The primary structure comprises 337 residues: DNA-directed RNA polymerase subunit alpha (337 aa).

Positions 1–233 are alpha N-terminal domain (alpha-NTD); the sequence is MVREEIAEST…DLFVPFLHAE (233 aa). Residues 266–337 form an alpha C-terminal domain (alpha-CTD) region; that stretch reads GIPLKYIFID…FAVDLPKVLI (72 aa).

The protein belongs to the RNA polymerase alpha chain family. As to quaternary structure, in plastids the minimal PEP RNA polymerase catalytic core is composed of four subunits: alpha, beta, beta', and beta''. When a (nuclear-encoded) sigma factor is associated with the core the holoenzyme is formed, which can initiate transcription.

The protein localises to the plastid. It is found in the chloroplast. It carries out the reaction RNA(n) + a ribonucleoside 5'-triphosphate = RNA(n+1) + diphosphate. Functionally, DNA-dependent RNA polymerase catalyzes the transcription of DNA into RNA using the four ribonucleoside triphosphates as substrates. In Dioscorea elephantipes (Elephant's foot yam), this protein is DNA-directed RNA polymerase subunit alpha.